The following is a 478-amino-acid chain: Siroheme synthase (478 aa).

The tract at residues 1–207 is precorrin-2 dehydrogenase /sirohydrochlorin ferrochelatase; it reads MTANVLFPLF…QRHAEAEAVL (207 aa). Residues 25-26 and 46-47 each bind NAD(+); these read KV and PS. Ser132 carries the phosphoserine modification. The uroporphyrinogen-III C-methyltransferase stretch occupies residues 220-478; it reads GSVTLVGAGA…PCPPRTHPIS (259 aa). Catalysis depends on Asp252, which acts as the Proton acceptor. Residue Lys274 is the Proton donor of the active site. Residues 305 to 307, Val310, 335 to 336, Met387, and Gly416 each bind S-adenosyl-L-methionine; these read GGD and TA.

It in the N-terminal section; belongs to the precorrin-2 dehydrogenase / sirohydrochlorin ferrochelatase family. In the C-terminal section; belongs to the precorrin methyltransferase family.

The enzyme catalyses uroporphyrinogen III + 2 S-adenosyl-L-methionine = precorrin-2 + 2 S-adenosyl-L-homocysteine + H(+). It catalyses the reaction precorrin-2 + NAD(+) = sirohydrochlorin + NADH + 2 H(+). It carries out the reaction siroheme + 2 H(+) = sirohydrochlorin + Fe(2+). Its pathway is cofactor biosynthesis; adenosylcobalamin biosynthesis; precorrin-2 from uroporphyrinogen III: step 1/1. It participates in cofactor biosynthesis; adenosylcobalamin biosynthesis; sirohydrochlorin from precorrin-2: step 1/1. It functions in the pathway porphyrin-containing compound metabolism; siroheme biosynthesis; precorrin-2 from uroporphyrinogen III: step 1/1. The protein operates within porphyrin-containing compound metabolism; siroheme biosynthesis; siroheme from sirohydrochlorin: step 1/1. Its pathway is porphyrin-containing compound metabolism; siroheme biosynthesis; sirohydrochlorin from precorrin-2: step 1/1. Functionally, multifunctional enzyme that catalyzes the SAM-dependent methylations of uroporphyrinogen III at position C-2 and C-7 to form precorrin-2 via precorrin-1. Then it catalyzes the NAD-dependent ring dehydrogenation of precorrin-2 to yield sirohydrochlorin. Finally, it catalyzes the ferrochelation of sirohydrochlorin to yield siroheme. The protein is Siroheme synthase of Xylella fastidiosa (strain M23).